Reading from the N-terminus, the 241-residue chain is Transcriptional regulatory protein SrrA (241 aa).

One can recognise a Response regulatory domain in the interval 4-117; sequence EILIVDDEDR…EVVLRVKALL (114 aa). Position 53 is a 4-aspartylphosphate (Asp53). Positions 133 to 233 form a DNA-binding region, ompR/PhoB-type; the sequence is RDVIEFKHLE…VWGVGYKFEV (101 aa).

Post-translationally, phosphorylated by SrrB.

The protein resides in the cytoplasm. Functionally, member of the two-component regulatory system SrrA/SrrB, which is involved in the global regulation of staphylococcal virulence factors in response to environmental oxygen levels as well as biofilm formation. Also plays an essential role in host-derived nitric oxide resistance by regulating hmp/flavohemoglobin, an enzyme that detoxifies nitric oxide by converting it to nitrate. Functions as a transcription regulator by direct binding to promoter regions of target genes. In Staphylococcus aureus (strain NCTC 8325 / PS 47), this protein is Transcriptional regulatory protein SrrA (srrA).